Consider the following 630-residue polypeptide: Heat shock cognate 70 kDa protein 3 (630 aa).

The interval 611-630 (FYQGNNNPKPTTTTFNQDLD) is disordered. The segment covering 615–630 (NNNPKPTTTTFNQDLD) has biased composition (low complexity).

It belongs to the heat shock protein 70 family.

Its function is as follows. May function in protein folding and assembly, and disassembly of protein complexes. This is Heat shock cognate 70 kDa protein 3 from Dictyostelium discoideum (Social amoeba).